A 192-amino-acid polypeptide reads, in one-letter code: Probable protein adenylyltransferase y4lH (192 aa).

A Fido domain is found at 52–190; it reads LDFAHYRALH…LAPLAAEIRR (139 aa). ATP contacts are provided by residues 82–83 and 139–141; these read KG and GNG.

The protein belongs to the fic family.

The catalysed reaction is L-tyrosyl-[protein] + ATP = O-(5'-adenylyl)-L-tyrosyl-[protein] + diphosphate. It catalyses the reaction L-threonyl-[protein] + ATP = 3-O-(5'-adenylyl)-L-threonyl-[protein] + diphosphate. Functionally, probable adenylyltransferase that mediates the addition of adenosine 5'-monophosphate (AMP) to specific residues of target proteins. This is Probable protein adenylyltransferase y4lH from Sinorhizobium fredii (strain NBRC 101917 / NGR234).